We begin with the raw amino-acid sequence, 128 residues long: Con-Ins F1 (128 aa).

Positions 1-24 (MTTSSYFLLVTLGLLLYVCRSSFG) are cleaved as a signal peptide. Disulfide bonds link Cys29-Cys104, Cys41-Cys107, Cys53-Cys120, and Cys106-Cys111. Residues 59-89 (LQGGTGKKRGRASPLRKRRAFLSMLKARAKR) constitute a propeptide, c peptide. Glu115 carries the post-translational modification 4-carboxyglutamate; partial. Ser127 carries the post-translational modification Serine amide.

It belongs to the insulin family. As to quaternary structure, heterodimer of A and B chains; disulfide-linked. Expressed by the venom gland.

It is found in the secreted. Functionally, this venom insulin facilitates prey capture by rapidly inducing hypoglycemic shock. Intraperitoneal injection of this peptide into zebrafish lowers blood glucose with the same potency than human insulin. In vivo, when applied to water, this peptide reduces overall locomotor activity of zebrafish larvae, observed as a significant decrease in the percentage of time spent swimming and movement frequency. The polypeptide is Con-Ins F1 (Conus floridulus (Cone snail)).